The chain runs to 206 residues: Recombination protein RecR (206 aa).

The C4-type zinc finger occupies 58 to 73; it reads CENCHNISDTKVCEIC. The 96-residue stretch at 81-176 folds into the Toprim domain; the sequence is QTICVVEDIR…IISTIARGIS (96 aa).

This sequence belongs to the RecR family.

Its function is as follows. May play a role in DNA repair. It seems to be involved in an RecBC-independent recombinational process of DNA repair. It may act with RecF and RecO. In Flavobacterium johnsoniae (strain ATCC 17061 / DSM 2064 / JCM 8514 / BCRC 14874 / CCUG 350202 / NBRC 14942 / NCIMB 11054 / UW101) (Cytophaga johnsonae), this protein is Recombination protein RecR.